A 99-amino-acid chain; its full sequence is Malonate decarboxylase acyl carrier protein (99 aa).

S25 is modified (O-(phosphoribosyl dephospho-coenzyme A)serine).

This sequence belongs to the MdcC family. In terms of processing, covalently binds the prosthetic group of malonate decarboxylase.

It localises to the cytoplasm. Functionally, subunit of malonate decarboxylase, it is an acyl carrier protein to which acetyl and malonyl thioester residues are bound via a 2'-(5''-phosphoribosyl)-3'-dephospho-CoA prosthetic group and turn over during the catalytic mechanism. The polypeptide is Malonate decarboxylase acyl carrier protein (Pseudomonas putida (strain W619)).